The sequence spans 147 residues: Hemoglobin subunit beta (147 aa).

Residues 3 to 147 (EWTDDERAII…VVSALGRQYH (145 aa)) form the Globin domain. Heme b-binding residues include H64 and H93.

It belongs to the globin family. In terms of assembly, heterotetramer of two alpha chains and two beta chains. As to expression, red blood cells.

In terms of biological role, involved in oxygen transport from gills to the various peripheral tissues. The protein is Hemoglobin subunit beta (hbb) of Melanogrammus aeglefinus (Haddock).